A 304-amino-acid polypeptide reads, in one-letter code: GTPase Era (304 aa).

In terms of domain architecture, Era-type G spans 9–176 (KSGFVSIIGR…LLEITKHLSE (168 aa)). Residues 17–24 (GRPNVGKS) form a G1 region. Residue 17–24 (GRPNVGKS) participates in GTP binding. A G2 region spans residues 43–47 (QTTRN). Residues 64-67 (DTPG) form a G3 region. GTP contacts are provided by residues 64–68 (DTPGI) and 126–129 (NKID). Residues 126 to 129 (NKID) form a G4 region. The tract at residues 155 to 157 (VSA) is G5. Positions 199 to 285 (IREKVLHLTR…FLELWVKVQK (87 aa)) constitute a KH type-2 domain.

It belongs to the TRAFAC class TrmE-Era-EngA-EngB-Septin-like GTPase superfamily. Era GTPase family. In terms of assembly, monomer.

The protein localises to the cytoplasm. Its subcellular location is the cell membrane. Its function is as follows. An essential GTPase that binds both GDP and GTP, with rapid nucleotide exchange. Plays a role in 16S rRNA processing and 30S ribosomal subunit biogenesis and possibly also in cell cycle regulation and energy metabolism. The protein is GTPase Era of Halalkalibacterium halodurans (strain ATCC BAA-125 / DSM 18197 / FERM 7344 / JCM 9153 / C-125) (Bacillus halodurans).